Reading from the N-terminus, the 125-residue chain is Histone H1-like protein HC1 (125 aa).

It belongs to the histone H1/H5 family. HCT subfamily.

Functionally, might have a role analogous to that of eukaryotic histone proteins. The polypeptide is Histone H1-like protein HC1 (hctA) (Chlamydia muridarum (strain MoPn / Nigg)).